The following is a 238-amino-acid chain: UPF0173 metal-dependent hydrolase Helmi_16730 (238 aa).

Belongs to the UPF0173 family.

The chain is UPF0173 metal-dependent hydrolase Helmi_16730 from Heliobacterium modesticaldum (strain ATCC 51547 / Ice1).